The following is an 808-amino-acid chain: Genome polyprotein (808 aa).

A disordered region spans residues 34–55 (TAEVGSHQPEPLKTSVDKPGSK). Short sequence motifs ((L)YPX(n)L motif) lie at residues 146–150 (YPHGL) and 179–184 (YPVWEL).

This sequence belongs to the picornaviridae polyprotein family. In terms of assembly, homopentamer. Homooligomer. Interacts with capsid protein VP2. Interacts with capsid protein VP3. As to quaternary structure, interacts with capsid protein VP1. Interacts with capsid protein VP3. In terms of assembly, interacts with capsid protein VP1. Interacts with capsid protein VP2. Post-translationally, specific enzymatic cleavages by viral protease in vivo yield a variety of precursors and mature proteins. Polyprotein processing intermediates are produced, such as P1-2A which is a functional precursor of the structural proteins, VP0 which is a VP4-VP2 precursor, VP1-2A precursor, 3ABC precursor which is a stable and catalytically active precursor of 3A, 3B and 3C proteins, 3AB and 3CD precursors. The assembly signal 2A is removed from VP1-2A by a host protease, possibly host Cathepsin L. This cleavage occurs over a region of 3 amino-acids probably generating VP1 proteins with heterogeneous C-termini. During virion maturation, immature virions are rendered infectious following cleavage of VP0 into VP4 and VP2. This maturation seems to be an autocatalytic event triggered by the presence of RNA in the capsid and is followed by a conformational change of the particle. In terms of processing, the assembly signal 2A is removed from VP1-2A by a host protease, possibly host Cathepsin L in naked virions. This cleavage does not occur in enveloped virions. This cleavage occurs over a region of 3 amino-acids probably generating VP1 proteins with heterogeneous C-termini. Post-translationally, unlike other picornaviruses, does not seem to be myristoylated.

The protein localises to the virion. It is found in the host endosome. The protein resides in the host multivesicular body. In terms of biological role, capsid proteins VP1, VP2, and VP3 form a closed capsid enclosing the viral positive strand RNA genome. All these proteins contain a beta-sheet structure called beta-barrel jelly roll. Together they form an icosahedral capsid (T=3) composed of 60 copies of each VP1, VP2, and VP3, with a diameter of approximately 300 Angstroms. VP1 is situated at the 12 fivefold axes, whereas VP2 and VP3 are located at the quasi-sixfold axes. The naked capsid interacts with the host receptor HAVCR1 to provide virion attachment to and probably entry into the target cell. VP0 precursor is a component of the immature procapsids. Functionally, plays a role in the assembly of the 12 pentamers into an icosahedral structure. Has not been detected in mature virions, supposedly owing to its small size. Its function is as follows. Precursor component of immature procapsids that corresponds to an extended form of the structural protein VP1. After maturation, possibly by the host Cathepsin L, the assembly signal 2A is cleaved to give rise to the mature VP1 protein. This Human hepatitis A virus genotype IIIA (isolate GA76) (HHAV) protein is Genome polyprotein.